The sequence spans 1547 residues: Tubby-related protein 4 (1547 aa).

WD repeat units lie at residues 80-119 (GHNS…WSVE), 123-162 (DRGA…HWSS), and 165-204 (NLES…LAHV). An SOCS box domain is found at 364 to 414 (ALYVVRVEHRVSSLQLLCQQAIASTLREDKDVNKLTLPPRLCSYLSTAFIP). The interval 530–580 (SPKISRSSKSPKLPRISIEARKSPKLPRAAQEISRSPRLPMRKPSMGSPSL) is disordered. Residues 533–546 (ISRSSKSPKLPRIS) show a composition bias toward low complexity. Ser577 carries the post-translational modification Phosphoserine. Residues Arg949 and Arg954 each carry the asymmetric dimethylarginine modification. Phosphoserine is present on residues Ser1347 and Ser1378. Residues 1374–1414 (SLISSPRLGREKKKVKSQKDQLKSKKLNKTNEFQDSSESEP) are disordered. The segment at 1436–1547 (SKRSLRTASE…ALANVTQRLK (112 aa)) is TUB.

Belongs to the TUB family.

It localises to the cytoplasm. Its pathway is protein modification; protein ubiquitination. May be a substrate-recognition component of a SCF-like ECS (Elongin-Cullin-SOCS-box protein) E3 ubiquitin ligase complex which mediates the ubiquitination and subsequent proteasomal degradation of target proteins. The sequence is that of Tubby-related protein 4 (Tulp4) from Mus musculus (Mouse).